A 347-amino-acid chain; its full sequence is S-adenosylmethionine:tRNA ribosyltransferase-isomerase (347 aa).

It belongs to the QueA family. In terms of assembly, monomer.

It is found in the cytoplasm. The catalysed reaction is 7-aminomethyl-7-carbaguanosine(34) in tRNA + S-adenosyl-L-methionine = epoxyqueuosine(34) in tRNA + adenine + L-methionine + 2 H(+). It functions in the pathway tRNA modification; tRNA-queuosine biosynthesis. Functionally, transfers and isomerizes the ribose moiety from AdoMet to the 7-aminomethyl group of 7-deazaguanine (preQ1-tRNA) to give epoxyqueuosine (oQ-tRNA). The polypeptide is S-adenosylmethionine:tRNA ribosyltransferase-isomerase (Treponema denticola (strain ATCC 35405 / DSM 14222 / CIP 103919 / JCM 8153 / KCTC 15104)).